The sequence spans 442 residues: tRNA-2-methylthio-N(6)-dimethylallyladenosine synthase (442 aa).

Residues 3–120 (KKLYIETHGC…LPEMIDAARI (118 aa)) enclose the MTTase N-terminal domain. [4Fe-4S] cluster-binding residues include Cys12, Cys49, Cys83, Cys157, Cys161, and Cys164. The 233-residue stretch at 143-375 (RVDGPSAYVS…QHRLNQQGFE (233 aa)) folds into the Radical SAM core domain. The 65-residue stretch at 378-442 (RQMVGSIQRI…PHSLRGSLLQ (65 aa)) folds into the TRAM domain.

This sequence belongs to the methylthiotransferase family. MiaB subfamily. As to quaternary structure, monomer. Requires [4Fe-4S] cluster as cofactor.

The protein localises to the cytoplasm. It catalyses the reaction N(6)-dimethylallyladenosine(37) in tRNA + (sulfur carrier)-SH + AH2 + 2 S-adenosyl-L-methionine = 2-methylsulfanyl-N(6)-dimethylallyladenosine(37) in tRNA + (sulfur carrier)-H + 5'-deoxyadenosine + L-methionine + A + S-adenosyl-L-homocysteine + 2 H(+). Functionally, catalyzes the methylthiolation of N6-(dimethylallyl)adenosine (i(6)A), leading to the formation of 2-methylthio-N6-(dimethylallyl)adenosine (ms(2)i(6)A) at position 37 in tRNAs that read codons beginning with uridine. The protein is tRNA-2-methylthio-N(6)-dimethylallyladenosine synthase of Pseudomonas savastanoi pv. phaseolicola (strain 1448A / Race 6) (Pseudomonas syringae pv. phaseolicola (strain 1448A / Race 6)).